The sequence spans 263 residues: 4-hydroxy-tetrahydrodipicolinate reductase (263 aa).

NAD(+) contacts are provided by residues 7 to 12 (GASGRM) and aspartate 33. Arginine 34 contacts NADP(+). NAD(+) contacts are provided by residues 96–98 (GTT) and 120–123 (APNM). The Proton donor/acceptor role is filled by histidine 153. Residue histidine 154 participates in (S)-2,3,4,5-tetrahydrodipicolinate binding. Residue lysine 157 is the Proton donor of the active site. 163 to 164 (GT) contributes to the (S)-2,3,4,5-tetrahydrodipicolinate binding site.

The protein belongs to the DapB family.

The protein localises to the cytoplasm. The enzyme catalyses (S)-2,3,4,5-tetrahydrodipicolinate + NAD(+) + H2O = (2S,4S)-4-hydroxy-2,3,4,5-tetrahydrodipicolinate + NADH + H(+). It catalyses the reaction (S)-2,3,4,5-tetrahydrodipicolinate + NADP(+) + H2O = (2S,4S)-4-hydroxy-2,3,4,5-tetrahydrodipicolinate + NADPH + H(+). It participates in amino-acid biosynthesis; L-lysine biosynthesis via DAP pathway; (S)-tetrahydrodipicolinate from L-aspartate: step 4/4. In terms of biological role, catalyzes the conversion of 4-hydroxy-tetrahydrodipicolinate (HTPA) to tetrahydrodipicolinate. This Ralstonia pickettii (strain 12J) protein is 4-hydroxy-tetrahydrodipicolinate reductase.